Reading from the N-terminus, the 3032-residue chain is MATNPQPQPPPPAPPPPPPQPQPPPPPPGPGAGPGASGPGSAGAGAGDPQLVAMIVNHLKSQGLFDQFRRDCLADVDTKPAYQNLRQRVDNFVANHLATHTWSPHLNKNQLRNNIRQQVLKSGMLESGIDRIISQVVDPKINHTFRPQVEKAVHEFLATLNHKEEAAGSTAPDDEKPESSVITQGAPAPGPSANVASDAMSILETITSLNQEANAARASTEMSNAKVSERTSRKLSSQPSTDVSTDKERGSEDATEREKATSDSGGDGLEAALKSEEPSDLPCPVEETKNHMKENNSLLLLSKDAQQESTDPKIKSMDKGEKKPDGNEKGERKKEKKEKTEKKIDHSKRNEDTQKVKDERQAKDKEVESTKLPSEKSNSRARAAEGTKEDCSLLDSDVDGLTDITVSSVHTSDLSSFEEDTEEEVVVSESMEEGEITSEDEEKNKQNKAKVQPGDSSDGKARGVRHAYVHKPYLYSKYYSDSDDELTVEQRRQSIAKEKEERLLRRRINREKLEEKRKQKAEKTKSSKVKSQGKSTVDLEDSSAKTLEPKAPRIKEVLKERKVLEKKVALSKRRRKDSRNVDENSKKKPQAEEESKEALKTTEYCEKEKASSKDLRHTHGKGEPSRPARRLSESLHSADENKTESKVEREYKRRTSTPVILEGAQEETDTRDGKKQPERSETNVEETQKQKSTLKNEKYQKKDDPETHGKGLPKKEAKSAKERPEKEKAQSEDKPSSKHKHKGDSVHKMSDETELHSSEKGETEESVRKQGQQTKLSSDDRTERKSKHKSERRLSVLGRDGKPVSEYTIKTDEHARKDNKKEKHLSSEKSKAEHKSRRSSDSKLQKDALSSKQHSVTSQKRSESCSEDKCETDSTNADSSFKPEELPHKERRRTKSLLEDKVVSKSKSKGQSKQTKAAETEAQEGVTRQVTTPKPDKEKNTEDNDTERQRKFKLEDRTSEETVTDPALENTVSSAHSAQKDSGHRAKLASIKEKHKTDKDSTSSKLERKVSDGHRSRSLKHSNKDMKKKEENKPDDKNGKEVDSSHEKGRGNGPVTEKKLSRRLCENRRGSTSQEMAKEDKLVANMSGTTSSSSLQRPKKSTETTSIPEQEPMEIDSEAAVENVSELSKTEDISSNSSQQDTDFENVTKHKATAGVLKDEFRTSMVDSKPAAAVTCKSGRGLAVTSISERHADHKSTLTKKVHSQGNPSKAAPREREPIQRGAQEVSVDSEVSRKALSRAPSENEKGQKNLKGMSKTTEECGTHRNASLEYSTDSDLLSSSGSVTVVPQKESHNSNTIPVIDREAISEGGRASTSLANHSDVPNQYSTVKKSEVHKTNGSKEGNDGFTVDMPTKANGGSKRHLSEDSQATLLYSKESKISIPLADKSMSVTGDNKNINKQRSLMGTAKRESDLKVNPDIKQDSAAGEHVVDLSTRKEAETVRRKHNKEIPTDVERKTENSEVDTSARRDSAPVPQQRHGKMERGAAGSGRRDKAFIATSTEGTDKGIMLNTVKTGDATTTSSEVGEKGTALPCTSIEADEGFMMGACPKKHPLQVGAEASECTVFAAAEEGKGVVTEGFAESEILLTSSKEGESGECAVAESEDRVAGPLAAHTVQAEANVNSITTEEKDDAVTSAGSEEKCGGSACTVEGTATFIGEVESDGAVTSAGTEIRAGSLSSEDVDGSQENRIQVGPKKETEGTVTCTETKGRNDNFICLVTRVETQEQRVVTGADVVQVNAAKPQEANANQGDGSGTDGAEGESAVTSTGITEEDGEASANCTGSEDNREGCAISSETEESAESAMDSTEAKDITNAPLVAAGPCDDEGIVTSTGAKEEDDEDEGVVTSTGRGNEPGHASACTGIEESEGMMVCESGEGGAQIGPTIDHVNAEAGAATVNTNDSNVDSMSGAEKEIKDTNICSSAKGIVESSVTSALAGNSDRPPVLCGSEGPMASASSHHSDSQLTRKETVEDTTISTGLVKGSDDVLVSGEVPECEVGHMSPRKNEECDGLMASTASCDVSNKDSLAGSKSQGNGLMISTSTNACTPQISAVIDVRGGHLSTLSTEEIRDGVRVHREGFEAPMPSAVSGENSQLTASRSEEKDECAMISTSIGEEFELPISSAVTVTCAERQQPVAAVEESTTGPALVSTEDFEVPMPSAPTEAESPLASTSKEEKDECALISTSIAEECEASVFGVSRNAPSVTDGNAVISTSSVEDCEGSVSSAVPQESVCPSVIPVEETGDTAMISTSTSEGREAVMVGTIPTDDDQATTVRGEDLSDAAIISTSTAECVLTCTSLSRHEENQQATHNPEGNGGHLATKQSKCELPMPSLVAERNCKCPGPFRMGKGVGPLMAVGTRGEHDRLPVCEPSVGQGQPGTALCLGEEESHGMDCPGQDLNAKERNTLLSSVQRESKSAEAEAAGDSSTARRTVRKDSERNANSLSETNCLREPEQKPAEDTSGSTHCLTAVNPGAEADGMLPITHAALEYPDHQEPESNLKTTTKCITGQESQMPSSHTGVLSAVCHVAPCASEQEGGLPTKSDHSGTWTSEGSPEKMGHVAGARQSFHREGNLDVTLPPEDNGCGVGNEESPPKGIGGLELSTGLTTEISVSSEEDTSHGVVAAPENPCVGRRRGAAELQMEALLMRESLNVEKSESRINEEIHFESQNKEEICCGRKGSTEALSGCSVEADPEEVEEEEKQISQRNRKPDYSSSEEELDDSPDVLDSRIETAQRQYSETEPHDTKEENSGDVEEFSSVTSKTNSSTGLEDRDEFSSSEGTGEKTEPNEDDGSIKSQEDDHPIIIKRRRGRPRKYPAETAFKSKEDSKTETDITTVEQSSPSGKLKVSQADESNKEIANLEEKSTSNDDSEEKTASMRLRGRKPKRSLTSSDDAESSEPERKRQKSVSETSEDKKDEESDEEEEEEEEEEPLGATTRSATRSEAQRKNHSKPSTRATSKLGIPETISPRNRQKLAKEKLSTSEKVSKSPPLGRSKAQLSPSVKRKREVSPPGARTRGQQKVDENPLKKAKR.

Positions 1 to 31 (MATNPQPQPPPPAPPPPPPQPQPPPPPPGPG) are enriched in pro residues. 4 disordered regions span residues 1–48 (MATN…GAGD), 164–195 (EEAA…SANV), 214–397 (NAAR…LDSD), and 409–465 (VHTS…RGVR). Over residues 32-46 (AGPGASGPGSAGAGA) the composition is skewed to gly residues. Over residues 234–243 (KLSSQPSTDV) the composition is skewed to polar residues. A compositionally biased stretch (basic and acidic residues) spans 244–261 (STDKERGSEDATEREKAT). Serine 264 carries the post-translational modification Phosphoserine. The segment covering 310-391 (TDPKIKSMDK…RAAEGTKEDC (82 aa)) has biased composition (basic and acidic residues). The span at 416–441 (SFEEDTEEEVVVSESMEEGEITSEDE) shows a compositional bias: acidic residues. The residue at position 471 (lysine 471) is an N6-acetyllysine. 2 positions are modified to phosphoserine: serine 480 and serine 482. 7 disordered regions span residues 480–1153 (SDSD…HKAT), 1165–1296 (MVDS…HNSN), 1309–1366 (GGRA…LSED), 1424–1491 (AAGE…SGRR), 1675–1701 (GSLS…TEGT), 1740–1858 (AKPQ…GHAS), and 1934–1978 (ALAG…ISTG). Basic and acidic residues-rich tracts occupy residues 488–503 (VEQR…EERL) and 510–525 (REKL…EKTK). The residue at position 534 (lysine 534) is an N6-acetyllysine. Basic and acidic residues-rich tracts occupy residues 547 to 568 (LEPK…EKKV) and 578 to 653 (SRNV…EYKR). Phosphoserine occurs at positions 632 and 656. A Phosphothreonine modification is found at threonine 657. Composition is skewed to basic and acidic residues over residues 668 to 736 (TDTR…DKPS), 743 to 768 (GDSV…ESVR), and 799 to 846 (RDGK…KLQK). Polar residues predominate over residues 848–859 (ALSSKQHSVTSQ). Basic and acidic residues-rich tracts occupy residues 860–872 (KRSE…KCET), 934–960 (KPDK…RTSE), 978–1015 (AQKD…DGHR), and 1022–1069 (SNKD…ENRR). A Phosphoserine modification is found at serine 1071. The span at 1086–1096 (MSGTTSSSSLQ) shows a compositional bias: polar residues. Serine 1138 carries the phosphoserine modification. Residues 1272–1286 (STDSDLLSSSGSVTV) show a composition bias toward low complexity. A compositionally biased stretch (polar residues) spans 1312–1329 (ASTSLANHSDVPNQYSTV). 2 positions are modified to phosphoserine: serine 1315 and serine 1364. 2 stretches are compositionally biased toward basic and acidic residues: residues 1428 to 1470 (HVVD…RRDS) and 1479 to 1491 (GKME…SGRR). Serine 1676 and serine 1685 each carry phosphoserine. A compositionally biased stretch (basic and acidic residues) spans 1958–1970 (HHSDSQLTRKETV). Residues serine 1989, serine 2001, serine 2092, and serine 2166 each carry the phosphoserine modification. The segment at 2082–2101 (PMPSAVSGENSQLTASRSEE) is disordered. Over residues 2088–2097 (SGENSQLTAS) the composition is skewed to polar residues. Disordered regions lie at residues 2303-2322 (EENQ…LATK), 2370-2469 (EPSV…HCLT), 2536-2559 (EGGL…EKMG), and 2575-2596 (DVTL…PPKG). Phosphoserine is present on residues serine 2417 and serine 2443. Residues 2449–2459 (CLREPEQKPAE) are compositionally biased toward basic and acidic residues. Phosphoserine is present on serine 2554. Phosphoserine is present on serine 2681. Residues 2682 to 3032 (TEALSGCSVE…DENPLKKAKR (351 aa)) are disordered. Composition is skewed to acidic residues over residues 2692–2701 (ADPEEVEEEE) and 2715–2725 (SSEEELDDSPD). A compositionally biased stretch (basic and acidic residues) spans 2727-2750 (LDSRIETAQRQYSETEPHDTKEEN). Positions 2758–2769 (SSVTSKTNSSTG) are enriched in polar residues. Basic and acidic residues predominate over residues 2782–2804 (TGEKTEPNEDDGSIKSQEDDHPI). Basic residues predominate over residues 2805–2815 (IIKRRRGRPRK). Positions 2807–2819 (KRRRGRPRKYPAE) form a DNA-binding region, a.T hook. Basic and acidic residues predominate over residues 2822–2832 (FKSKEDSKTET). A compositionally biased stretch (polar residues) spans 2833–2843 (DITTVEQSSPS). Serine 2840 and serine 2841 each carry phosphoserine. A compositionally biased stretch (basic and acidic residues) spans 2853–2867 (ESNKEIANLEEKSTS). At serine 2888 the chain carries Phosphoserine. Phosphothreonine is present on threonine 2890. 3 positions are modified to phosphoserine: serine 2892, serine 2898, and serine 2907. Residues lysine 2915 and lysine 2916 each participate in a glycyl lysine isopeptide (Lys-Gly) (interchain with G-Cter in ubiquitin) cross-link. Over residues 2919-2932 (ESDEEEEEEEEEEP) the composition is skewed to acidic residues. Serine 2920 bears the Phosphoserine mark. Basic and acidic residues predominate over residues 2975-2987 (LAKEKLSTSEKVS). Serine 3000 carries the post-translational modification Phosphoserine. The segment covering 3020 to 3032 (QKVDENPLKKAKR) has biased composition (basic and acidic residues).

Belongs to the BOD1 family. As to quaternary structure, interacts (via COMPASS-Shg1 domain) with SETD1A at stalled replication forks; this interaction mediates FANCD2-dependent nucleosome remodeling at reversed forks protecting them from nucleolytic degradation.

The protein resides in the chromosome. Functionally, component of the fork protection machinery required to protect stalled/damaged replication forks from uncontrolled DNA2-dependent resection. Acts by stabilizing RAD51 at stalled replication forks and protecting RAD51 nucleofilaments from the antirecombinogenic activities of FBH1 and BLM. Does not regulate spindle orientation. This Mus musculus (Mouse) protein is Biorientation of chromosomes in cell division protein 1-like 1.